A 251-amino-acid chain; its full sequence is Ubiquinone/menaquinone biosynthesis C-methyltransferase UbiE (251 aa).

S-adenosyl-L-methionine contacts are provided by residues Thr74, Asp95, and 123-124 (NA).

This sequence belongs to the class I-like SAM-binding methyltransferase superfamily. MenG/UbiE family.

The catalysed reaction is a 2-demethylmenaquinol + S-adenosyl-L-methionine = a menaquinol + S-adenosyl-L-homocysteine + H(+). The enzyme catalyses a 2-methoxy-6-(all-trans-polyprenyl)benzene-1,4-diol + S-adenosyl-L-methionine = a 5-methoxy-2-methyl-3-(all-trans-polyprenyl)benzene-1,4-diol + S-adenosyl-L-homocysteine + H(+). The protein operates within quinol/quinone metabolism; menaquinone biosynthesis; menaquinol from 1,4-dihydroxy-2-naphthoate: step 2/2. It participates in cofactor biosynthesis; ubiquinone biosynthesis. Methyltransferase required for the conversion of demethylmenaquinol (DMKH2) to menaquinol (MKH2) and the conversion of 2-polyprenyl-6-methoxy-1,4-benzoquinol (DDMQH2) to 2-polyprenyl-3-methyl-6-methoxy-1,4-benzoquinol (DMQH2). The chain is Ubiquinone/menaquinone biosynthesis C-methyltransferase UbiE from Shewanella woodyi (strain ATCC 51908 / MS32).